Here is a 56-residue protein sequence, read N- to C-terminus: Small ribosomal subunit protein uS14 (56 aa).

Zn(2+) contacts are provided by Cys21, Cys24, Cys39, and Cys42.

This sequence belongs to the universal ribosomal protein uS14 family. Zinc-binding uS14 subfamily. In terms of assembly, part of the 30S ribosomal subunit. Zn(2+) is required as a cofactor.

Its function is as follows. Binds 16S rRNA, required for the assembly of 30S particles. The polypeptide is Small ribosomal subunit protein uS14 (Methanospirillum hungatei JF-1 (strain ATCC 27890 / DSM 864 / NBRC 100397 / JF-1)).